Here is a 208-residue protein sequence, read N- to C-terminus: FMN-dependent NADH:quinone oxidoreductase (208 aa).

FMN-binding positions include 17-19 (SNS), 99-102 (MWNL), and 143-146 (SRGG).

The protein belongs to the azoreductase type 1 family. In terms of assembly, homodimer. It depends on FMN as a cofactor.

The enzyme catalyses 2 a quinone + NADH + H(+) = 2 a 1,4-benzosemiquinone + NAD(+). It carries out the reaction N,N-dimethyl-1,4-phenylenediamine + anthranilate + 2 NAD(+) = 2-(4-dimethylaminophenyl)diazenylbenzoate + 2 NADH + 2 H(+). Quinone reductase that provides resistance to thiol-specific stress caused by electrophilic quinones. Functionally, also exhibits azoreductase activity. Catalyzes the reductive cleavage of the azo bond in aromatic azo compounds to the corresponding amines. This is FMN-dependent NADH:quinone oxidoreductase from Staphylococcus haemolyticus (strain JCSC1435).